The following is a 37-amino-acid chain: Cytochrome b6-f complex subunit 5 (37 aa).

A helical transmembrane segment spans residues 5-25 (FLFGIVLGLIPITLAGLFVTA).

Belongs to the PetG family. In terms of assembly, the 4 large subunits of the cytochrome b6-f complex are cytochrome b6, subunit IV (17 kDa polypeptide, PetD), cytochrome f and the Rieske protein, while the 4 small subunits are PetG, PetL, PetM and PetN. The complex functions as a dimer.

It is found in the plastid. Its subcellular location is the chloroplast thylakoid membrane. Component of the cytochrome b6-f complex, which mediates electron transfer between photosystem II (PSII) and photosystem I (PSI), cyclic electron flow around PSI, and state transitions. PetG is required for either the stability or assembly of the cytochrome b6-f complex. In Platanus occidentalis (Sycamore), this protein is Cytochrome b6-f complex subunit 5.